The sequence spans 163 residues: uncharacterized protein (163 aa).

The tract at residues 142–163 is disordered; it reads PQIVISEHNNTKETSPSRQFEH. Residues 153–163 show a composition bias toward polar residues; sequence KETSPSRQFEH.

Belongs to the RCAN family.

In terms of biological role, inhibits calcineurin-dependent transcriptional responses by binding to the catalytic domain of calcineurin. This is an uncharacterized protein from Schizosaccharomyces pombe (strain 972 / ATCC 24843) (Fission yeast).